The sequence spans 164 residues: UPF0114 protein Sbal_0780 (164 aa).

Transmembrane regions (helical) follow at residues 15 to 35 (IMAPIYLGLSLILFALGVKFF), 53 to 73 (LVLLTLSLIDITLVGGLIVMV), 109 to 129 (VAASIVAISSIHLLKVFMNAE), and 136 to 156 (IMWYLLIHITFVLSAFAMGYL).

Belongs to the UPF0114 family.

It localises to the cell membrane. This is UPF0114 protein Sbal_0780 from Shewanella baltica (strain OS155 / ATCC BAA-1091).